A 447-amino-acid chain; its full sequence is tRNA-2-methylthio-N(6)-dimethylallyladenosine synthase (447 aa).

One can recognise an MTTase N-terminal domain in the interval 10–128 (KLFCISTYGC…FPEYLHRVLQ (119 aa)). Cys-19, Cys-55, Cys-89, Cys-165, Cys-169, and Cys-172 together coordinate [4Fe-4S] cluster. Residues 151–382 (RKSDVKAFVT…EAINKKVVIK (232 aa)) enclose the Radical SAM core domain. One can recognise a TRAM domain in the interval 384-447 (KEYEGKVVEV…PFSLIGEIVE (64 aa)).

Belongs to the methylthiotransferase family. MiaB subfamily. As to quaternary structure, monomer. Requires [4Fe-4S] cluster as cofactor.

It is found in the cytoplasm. It catalyses the reaction N(6)-dimethylallyladenosine(37) in tRNA + (sulfur carrier)-SH + AH2 + 2 S-adenosyl-L-methionine = 2-methylsulfanyl-N(6)-dimethylallyladenosine(37) in tRNA + (sulfur carrier)-H + 5'-deoxyadenosine + L-methionine + A + S-adenosyl-L-homocysteine + 2 H(+). Functionally, catalyzes the methylthiolation of N6-(dimethylallyl)adenosine (i(6)A), leading to the formation of 2-methylthio-N6-(dimethylallyl)adenosine (ms(2)i(6)A) at position 37 in tRNAs that read codons beginning with uridine. The sequence is that of tRNA-2-methylthio-N(6)-dimethylallyladenosine synthase from Clostridium perfringens (strain ATCC 13124 / DSM 756 / JCM 1290 / NCIMB 6125 / NCTC 8237 / Type A).